The primary structure comprises 481 residues: Endonuclease Bax1 (481 aa).

The interval methionine 1 to isoleucine 136 is N-terminal domain (NTD). Positions tyrosine 158–lysine 250 are central domain (CRD). The nuclease domain (NUS) stretch occupies residues aspartate 260–valine 364. Residues glutamate 265, aspartate 297, and glutamate 310 each contribute to the a divalent metal cation site. The segment at proline 414–asparagine 481 is C-terminal domain (CTD).

It belongs to the Bax1 family. In terms of assembly, homodimer in solution, forms a heterodimer with XPB2. Requires a divalent metal cation as cofactor.

In terms of biological role, a dual DNA endonuclease probably involved in nucleotide excision repair (NER). The N-terminal nuclease domain (NTD) of the XPB2-Bax1 complex cleaves on one side of a DNA bubble (which presumably mimics DNA damage), while the NUS nuclease domain cleaves the other side, respectively called 5' and 3' nuclease activities. Interaction with XPB blocks the NTD nuclease activity. Binds to and stimulates the ATPase activity (and probably also helicase activity) of XPB2. Increases affinity of XPB2 for forked DNA. Does not stimulate the DNA-dependent activity of XPB1. In an XPB2-Bax1-bubble DNA crystal (12 bp of dsDNA, a 6 base bubble and 6 bp of dsDNA) the short 6 bp arm is unwound. The 2 helicase and the ThM domains of XPB2 with the NTD and CRD domains of Bax1 encircle the DNA, forming a tunnel where the 12 bp dsDNA and the ds-ssDNA junction are located. The ThM domain is wedged between the ssDNA tails, with the 5' ssDNA contacting Bax1 and the 3' ssDNA in a channel in XPB2. The nuclease domain (NUS) of Bax1 does not contact DNA in the bubble DNA complex. This chain is Endonuclease Bax1, found in Sulfurisphaera tokodaii (strain DSM 16993 / JCM 10545 / NBRC 100140 / 7) (Sulfolobus tokodaii).